Here is a 137-residue protein sequence, read N- to C-terminus: Probable 4-amino-4-deoxy-L-arabinose-phosphoundecaprenol flippase subunit ArnF (137 aa).

Residues 1-3 (MNA) are Cytoplasmic-facing. The helical transmembrane segment at 4–24 (LRGWLAALGSMLLASAAQLGM) threads the bilayer. Residues 25 to 44 (RWGMSRLPLPEAWAGQTPER) lie on the Periplasmic side of the membrane. The chain crosses the membrane as a helical span at residues 45 to 65 (AALLAVALAVAAYAASLLCWL). The Cytoplasmic portion of the chain corresponds to 66-76 (AALRHLPLGRA). A helical membrane pass occupies residues 77-97 (YSLLSASYALVYLLAASLPAF). At 98–100 (DET) the chain is on the periplasmic side. A helical membrane pass occupies residues 101 to 121 (FSTSKILGVGLVVLGVLTVNA). At 122 to 137 (RRTAAAPAHHPSRKAP) the chain is on the cytoplasmic side.

The protein belongs to the ArnF family. As to quaternary structure, heterodimer of ArnE and ArnF.

The protein resides in the cell inner membrane. It participates in bacterial outer membrane biogenesis; lipopolysaccharide biosynthesis. Its function is as follows. Translocates 4-amino-4-deoxy-L-arabinose-phosphoundecaprenol (alpha-L-Ara4N-phosphoundecaprenol) from the cytoplasmic to the periplasmic side of the inner membrane. This is Probable 4-amino-4-deoxy-L-arabinose-phosphoundecaprenol flippase subunit ArnF from Pseudomonas aeruginosa (strain LESB58).